The chain runs to 170 residues: Large ribosomal subunit protein uL10 (170 aa).

The protein belongs to the universal ribosomal protein uL10 family. In terms of assembly, part of the ribosomal stalk of the 50S ribosomal subunit. The N-terminus interacts with L11 and the large rRNA to form the base of the stalk. The C-terminus forms an elongated spine to which L12 dimers bind in a sequential fashion forming a multimeric L10(L12)X complex.

Its function is as follows. Forms part of the ribosomal stalk, playing a central role in the interaction of the ribosome with GTP-bound translation factors. This is Large ribosomal subunit protein uL10 from Lactobacillus helveticus (strain DPC 4571).